The following is a 418-amino-acid chain: Tryptophan synthase beta chain (418 aa).

Lysine 109 is modified (N6-(pyridoxal phosphate)lysine).

The protein belongs to the TrpB family. As to quaternary structure, tetramer of two alpha and two beta chains. Requires pyridoxal 5'-phosphate as cofactor.

The catalysed reaction is (1S,2R)-1-C-(indol-3-yl)glycerol 3-phosphate + L-serine = D-glyceraldehyde 3-phosphate + L-tryptophan + H2O. It functions in the pathway amino-acid biosynthesis; L-tryptophan biosynthesis; L-tryptophan from chorismate: step 5/5. Its function is as follows. The beta subunit is responsible for the synthesis of L-tryptophan from indole and L-serine. This is Tryptophan synthase beta chain from Thermus thermophilus (strain ATCC 27634 / DSM 579 / HB8).